The sequence spans 229 residues: MFNNSFWIFFAIIHFIIVLLFYKGFGKMGLFVWIGFATVCANLQVVKTVELFGLTATLGNVMYGTIFFATDVLNEKYGPAEARKAVWLGFSTLLTLTFVMQGVLLFEPASSDISQTALETIFGFLPRVALGSLLAFIFSQTLDVYVYSAIRRIFPSDRLLWLRNGGSTAVSQLFDTFIFTAVAFLGIYPADVWLHIFISTYLIKFAVSLISLPYAYAAKKMIPNDERSS.

7 helical membrane-spanning segments follow: residues 6-26, 28-48, 49-69, 86-106, 118-138, 160-182, and 192-214; these read FWIF…KGFG, MGLF…VVKT, VELF…IFFA, VWLG…VLLF, LETI…AFIF, LWLR…FTAV, and VWLH…SLPY.

Belongs to the vitamin uptake transporter (VUT/ECF) (TC 2.A.88) family. Q precursor transporter subfamily.

It is found in the cell membrane. Functionally, involved in the import of queuosine (Q) precursors, required for Q precursor salvage. The sequence is that of Probable queuosine precursor transporter (ypdP) from Bacillus subtilis (strain 168).